The chain runs to 77 residues: DNA-directed RNA polymerase subunit omega (77 aa).

This sequence belongs to the RNA polymerase subunit omega family. The RNAP catalytic core consists of 2 alpha, 1 beta, 1 beta' and 1 omega subunit. When a sigma factor is associated with the core the holoenzyme is formed, which can initiate transcription.

It carries out the reaction RNA(n) + a ribonucleoside 5'-triphosphate = RNA(n+1) + diphosphate. Functionally, promotes RNA polymerase assembly. Latches the N- and C-terminal regions of the beta' subunit thereby facilitating its interaction with the beta and alpha subunits. This chain is DNA-directed RNA polymerase subunit omega, found in Nitratidesulfovibrio vulgaris (strain ATCC 29579 / DSM 644 / CCUG 34227 / NCIMB 8303 / VKM B-1760 / Hildenborough) (Desulfovibrio vulgaris).